The sequence spans 128 residues: Gastrotropin (128 aa).

Ala2 bears the N-acetylalanine mark.

Belongs to the calycin superfamily. Fatty-acid binding protein (FABP) family. Found exclusively in the ileum and to a lesser extent in distal jejunum.

The protein localises to the cytoplasm. It localises to the membrane. Its function is as follows. Binds to bile acids and is involved in enterohepatic bile acid metabolism. Required for efficient apical to basolateral transport of conjugated bile acids in ileal enterocytes. Stimulates gastric acid and pepsinogen secretion. This chain is Gastrotropin (FABP6), found in Sus scrofa (Pig).